We begin with the raw amino-acid sequence, 143 residues long: Transcription antitermination protein NusB (143 aa).

Belongs to the NusB family.

Involved in transcription antitermination. Required for transcription of ribosomal RNA (rRNA) genes. Binds specifically to the boxA antiterminator sequence of the ribosomal RNA (rrn) operons. The protein is Transcription antitermination protein NusB of Buchnera aphidicola subsp. Acyrthosiphon pisum (strain 5A).